Consider the following 138-residue polypeptide: Basic phospholipase A2 Cll-N6 (138 aa).

Residues 1-16 form the signal peptide; sequence MRTFWIVAVLLVGVEG. Intrachain disulfides connect Cys42–Cys131, Cys44–Cys60, Cys59–Cys111, Cys65–Cys138, Cys66–Cys104, Cys73–Cys97, and Cys91–Cys102. The Ca(2+) site is built by Tyr43, Gly45, and Gly47. Residue His63 is part of the active site. Asp64 is a binding site for Ca(2+). Asp105 is a catalytic residue.

In terms of assembly, monomer. Ca(2+) serves as cofactor. Expressed by the venom gland.

It is found in the secreted. The catalysed reaction is a 1,2-diacyl-sn-glycero-3-phosphocholine + H2O = a 1-acyl-sn-glycero-3-phosphocholine + a fatty acid + H(+). Its function is as follows. Snake venom phospholipase A2 (PLA2) that shows myotoxic activities. PLA2 catalyzes the calcium-dependent hydrolysis of the 2-acyl groups in 3-sn-phosphoglycerides. This Crotalus lepidus lepidus (Mottled rock rattlesnake) protein is Basic phospholipase A2 Cll-N6.